The primary structure comprises 280 residues: 4-deoxy-L-threo-5-hexosulose-uronate ketol-isomerase (280 aa).

Zn(2+)-binding residues include His-198, His-200, Glu-205, and His-247.

The protein belongs to the KduI family. The cofactor is Zn(2+).

The catalysed reaction is 5-dehydro-4-deoxy-D-glucuronate = 3-deoxy-D-glycero-2,5-hexodiulosonate. It functions in the pathway glycan metabolism; pectin degradation; 2-dehydro-3-deoxy-D-gluconate from pectin: step 4/5. Its function is as follows. Catalyzes the isomerization of 5-dehydro-4-deoxy-D-glucuronate to 3-deoxy-D-glycero-2,5-hexodiulosonate. This is 4-deoxy-L-threo-5-hexosulose-uronate ketol-isomerase from Bacteroides fragilis (strain YCH46).